Here is a 374-residue protein sequence, read N- to C-terminus: Glutamate 5-kinase (374 aa).

K9 is an ATP binding site. Positions 49, 136, and 148 each coordinate substrate. ATP-binding positions include 168 to 169 (TD) and 210 to 216 (TGGMKSK). A PUA domain is found at 276–354 (SGVVRIDQGA…DEAKQLIPLV (79 aa)).

The protein belongs to the glutamate 5-kinase family.

The protein localises to the cytoplasm. It catalyses the reaction L-glutamate + ATP = L-glutamyl 5-phosphate + ADP. It participates in amino-acid biosynthesis; L-proline biosynthesis; L-glutamate 5-semialdehyde from L-glutamate: step 1/2. In terms of biological role, catalyzes the transfer of a phosphate group to glutamate to form L-glutamate 5-phosphate. This is Glutamate 5-kinase from Halalkalibacterium halodurans (strain ATCC BAA-125 / DSM 18197 / FERM 7344 / JCM 9153 / C-125) (Bacillus halodurans).